We begin with the raw amino-acid sequence, 210 residues long: Late histone H1 (210 aa).

2 disordered regions span residues 1 to 21 (MSAA…HPPT) and 86 to 210 (SFKL…AAKK). The H15 domain occupies 17-91 (AHPPTSQMVV…GASGSFKLGK (75 aa)). A compositionally biased stretch (basic residues) spans 104 to 113 (AAAKKAKLAA). Residues 114–123 (KKKEQKEKKA) show a composition bias toward basic and acidic residues. Basic residues predominate over residues 124-210 (AKTKARKEKL…KPAAKKAAKK (87 aa)).

Belongs to the histone H1/H5 family.

It localises to the nucleus. It is found in the chromosome. Its function is as follows. Histones H1 are necessary for the condensation of nucleosome chains into higher-order structures. The chain is Late histone H1 from Lytechinus pictus (Painted sea urchin).